Consider the following 172-residue polypeptide: Crossover junction endodeoxyribonuclease RuvC (172 aa).

Residues Asp11, Glu71, and Asp143 contribute to the active site. Positions 11, 71, and 143 each coordinate Mg(2+).

Belongs to the RuvC family. As to quaternary structure, homodimer which binds Holliday junction (HJ) DNA. The HJ becomes 2-fold symmetrical on binding to RuvC with unstacked arms; it has a different conformation from HJ DNA in complex with RuvA. In the full resolvosome a probable DNA-RuvA(4)-RuvB(12)-RuvC(2) complex forms which resolves the HJ. The cofactor is Mg(2+).

The protein resides in the cytoplasm. It carries out the reaction Endonucleolytic cleavage at a junction such as a reciprocal single-stranded crossover between two homologous DNA duplexes (Holliday junction).. In terms of biological role, the RuvA-RuvB-RuvC complex processes Holliday junction (HJ) DNA during genetic recombination and DNA repair. Endonuclease that resolves HJ intermediates. Cleaves cruciform DNA by making single-stranded nicks across the HJ at symmetrical positions within the homologous arms, yielding a 5'-phosphate and a 3'-hydroxyl group; requires a central core of homology in the junction. The consensus cleavage sequence is 5'-(A/T)TT(C/G)-3'. Cleavage occurs on the 3'-side of the TT dinucleotide at the point of strand exchange. HJ branch migration catalyzed by RuvA-RuvB allows RuvC to scan DNA until it finds its consensus sequence, where it cleaves and resolves the cruciform DNA. This chain is Crossover junction endodeoxyribonuclease RuvC, found in Brucella anthropi (strain ATCC 49188 / DSM 6882 / CCUG 24695 / JCM 21032 / LMG 3331 / NBRC 15819 / NCTC 12168 / Alc 37) (Ochrobactrum anthropi).